The following is a 315-amino-acid chain: Heterodimeric geranylgeranyl pyrophosphate synthase small subunit 1, chloroplastic (315 aa).

Residues Asp124 and Gly130 each coordinate Mg(2+). Lys228, Gln265, and Lys280 together coordinate dimethylallyl diphosphate.

This sequence belongs to the FPP/GGPP synthase family. Part of a heterodimeric geranyl(geranyl)diphosphate synthase. Mg(2+) serves as cofactor. In terms of tissue distribution, mainly expressed in trichomes, and, to a lower extent, in roots, leaves, flowers and stems.

The protein localises to the plastid. The protein resides in the chloroplast thylakoid membrane. It localises to the chloroplast. Its function is as follows. Heterodimeric geranyl(geranyl)-diphosphate (GPP) synthase small subunit. The small subunit alone is inactive in vitro while the large subunit GGPPS1 catalyzes mainly the production of geranygeranyl-diphosphate in vitro. Upon association of the two subunits, the product profile changes and the production of gerany-diphosphate is strongly increased. This is Heterodimeric geranylgeranyl pyrophosphate synthase small subunit 1, chloroplastic from Cannabis sativa (Hemp).